Consider the following 309-residue polypeptide: Vomeronasal type-1 receptor 52 (309 aa).

Over 1 to 19 the chain is Extracellular; the sequence is MNKDHTLYCSVYIRNAFFS. A helical transmembrane segment spans residues 20–40; sequence EIGIGISANSCLLLFHTFMFI. The Cytoplasmic portion of the chain corresponds to 41-49; sequence RGHRPRLTD. A helical membrane pass occupies residues 50-70; that stretch reads LPIGFVALIHLVMLLLAAYIT. At 71 to 93 the chain is on the extracellular side; it reads EDFFMSSGGWDDITCKLVIFLHR. C85 and C172 are disulfide-bonded. Residues 94–114 form a helical membrane-spanning segment; sequence FFRSLSVCATCLLSVFQAIIL. Residues 115 to 134 are Cytoplasmic-facing; sequence CPQSSHLAKLKQNSPHQLSY. A helical transmembrane segment spans residues 135 to 155; the sequence is FFIFLSIFYTSISSHILIAAI. Over 156–187 the chain is Extracellular; the sequence is PTQNITFVNLIYITNSCSFLPLSSSMQHTFST. Residue N159 is glycosylated (N-linked (GlcNAc...) asparagine). A helical transmembrane segment spans residues 188 to 208; the sequence is LLAFRNVFVIGLMGLSTCYMA. At 209–238 the chain is on the cytoplasmic side; the sequence is TLLCRHKTRSQRLQNSKLSPKATPEQRALR. A helical transmembrane segment spans residues 239–259; sequence TILMLMSFFLLMSTFDSIISY. The Extracellular portion of the chain corresponds to 260–268; it reads SRTILQGNP. The helical transmembrane segment at 269–289 threads the bilayer; the sequence is LPFCFQILVAHSYAAVSPLLV. The Cytoplasmic portion of the chain corresponds to 290–309; sequence LSNEKRITNLLISMYEKIVL.

Belongs to the G-protein coupled receptor 1 family.

Its subcellular location is the cell membrane. Its function is as follows. Putative pheromone receptor implicated in the regulation of social and reproductive behavior. The protein is Vomeronasal type-1 receptor 52 (Vmn1r52) of Mus musculus (Mouse).